The chain runs to 259 residues: Tryptophan synthase alpha chain (259 aa).

Catalysis depends on proton acceptor residues Glu35 and Asp46.

This sequence belongs to the TrpA family. As to quaternary structure, tetramer of two alpha and two beta chains.

It carries out the reaction (1S,2R)-1-C-(indol-3-yl)glycerol 3-phosphate + L-serine = D-glyceraldehyde 3-phosphate + L-tryptophan + H2O. It functions in the pathway amino-acid biosynthesis; L-tryptophan biosynthesis; L-tryptophan from chorismate: step 5/5. In terms of biological role, the alpha subunit is responsible for the aldol cleavage of indoleglycerol phosphate to indole and glyceraldehyde 3-phosphate. The polypeptide is Tryptophan synthase alpha chain (Methanococcus vannielii (strain ATCC 35089 / DSM 1224 / JCM 13029 / OCM 148 / SB)).